A 402-amino-acid polypeptide reads, in one-letter code: Serine/threonine-protein kinase US3 homolog (402 aa).

2 disordered regions span residues 1–21 (MSST…KVHD) and 46–88 (FPDS…SPET). A Protein kinase domain is found at 102–386 (YNIVSSLPPG…AQDILMLPLF (285 aa)). ATP contacts are provided by residues 110–118 (PGSEGYIYV) and Lys127. Asp218 acts as the Proton acceptor in catalysis.

This sequence belongs to the protein kinase superfamily. Ser/Thr protein kinase family. In terms of processing, phosphorylated by UL13 homolog; this phosphorylation regulates subsequent phosphorylation of UL31 and UL34 homologs by US3. Autophosphorylated.

The protein localises to the host cytoplasm. It localises to the host nucleus. The enzyme catalyses L-seryl-[protein] + ATP = O-phospho-L-seryl-[protein] + ADP + H(+). The catalysed reaction is L-threonyl-[protein] + ATP = O-phospho-L-threonyl-[protein] + ADP + H(+). Its function is as follows. Multifunctional serine/threonine kinase that plays a role in several processes including egress of virus particles from the nucleus, modulation of the actin cytoskeleton and inhibition of apoptosis. Phosphorylates UL31 and UL34 homologs, two critical regulators of capsid budding from nucleus to endoplasmic reticulum, thereby facilitating virion egress. Modulates and redistributes host components of the nuclear envelope, including LMNA, emerin/EMD and the nuclear matrix protein MATR3. Phosphorylates envelope glycoprotein B (gB), probably to direct it to the cell surface. Promotes virus intracellular spread by restructuring host cell cytoskeleton. Blocks host apoptosis to extend cell survival and allow efficient viral replication. Promotes viral gene expression by phosphorylating host HDAC2 to reduce viral genome silencing. The protein is Serine/threonine-protein kinase US3 homolog (US1206) of Gallid herpesvirus 2 (strain GA) (GaHV-2).